We begin with the raw amino-acid sequence, 279 residues long: Dermonecrotic toxin LspiSicTox-betaIE3ii (279 aa).

The active site involves H5. Positions 25 and 27 each coordinate Mg(2+). The active-site Nucleophile is H41. 2 disulfides stabilise this stretch: C45/C51 and C47/C190. A Mg(2+)-binding site is contributed by D85.

It belongs to the arthropod phospholipase D family. Class II subfamily. Mg(2+) is required as a cofactor. Expressed by the venom gland.

The protein localises to the secreted. It catalyses the reaction an N-(acyl)-sphingosylphosphocholine = an N-(acyl)-sphingosyl-1,3-cyclic phosphate + choline. The enzyme catalyses an N-(acyl)-sphingosylphosphoethanolamine = an N-(acyl)-sphingosyl-1,3-cyclic phosphate + ethanolamine. It carries out the reaction a 1-acyl-sn-glycero-3-phosphocholine = a 1-acyl-sn-glycero-2,3-cyclic phosphate + choline. The catalysed reaction is a 1-acyl-sn-glycero-3-phosphoethanolamine = a 1-acyl-sn-glycero-2,3-cyclic phosphate + ethanolamine. Its function is as follows. Dermonecrotic toxins cleave the phosphodiester linkage between the phosphate and headgroup of certain phospholipids (sphingolipid and lysolipid substrates), forming an alcohol (often choline) and a cyclic phosphate. This toxin acts on sphingomyelin (SM). It may also act on ceramide phosphoethanolamine (CPE), lysophosphatidylcholine (LPC) and lysophosphatidylethanolamine (LPE), but not on lysophosphatidylserine (LPS), and lysophosphatidylglycerol (LPG). It acts by transphosphatidylation, releasing exclusively cyclic phosphate products as second products. Induces dermonecrosis, hemolysis, increased vascular permeability, edema, inflammatory response, and platelet aggregation. The chain is Dermonecrotic toxin LspiSicTox-betaIE3ii from Loxosceles spinulosa (Recluse spider).